Here is a 320-residue protein sequence, read N- to C-terminus: Ribosomal RNA large subunit methyltransferase F (320 aa).

Residues 1–20 are disordered; the sequence is MHKSANSKTRKQSKGLHPRN.

It belongs to the methyltransferase superfamily. METTL16/RlmF family.

It is found in the cytoplasm. The enzyme catalyses adenosine(1618) in 23S rRNA + S-adenosyl-L-methionine = N(6)-methyladenosine(1618) in 23S rRNA + S-adenosyl-L-homocysteine + H(+). Functionally, specifically methylates the adenine in position 1618 of 23S rRNA. The chain is Ribosomal RNA large subunit methyltransferase F from Saccharophagus degradans (strain 2-40 / ATCC 43961 / DSM 17024).